Reading from the N-terminus, the 273-residue chain is MSFDGKLKAQSILETYKNFDWSKCKLVIIQANDDDSSDSFIKQKLIACNTVGAKSELIKLSNQITQAELIEKIISLNHDVNVTGIILQLPVYPHLDKNSLLEAINPLKDVDGLTTNHLAEIKPCIVEAIITLKELFNLEFNNQKIVVVGLGITGGKPIYEFLKTSGYKVQACDKDTPNTFELIKSADIVFTAIGKSHFFQAKNFKKGVILFDIGVSRNKQNKLCGDINPEGIEKKARWWTKTPGGVGPFTVLAIIKNLWILHEKNKRCLQSSI.

NADP(+)-binding positions include 149-151 (GLG) and Val-215.

This sequence belongs to the tetrahydrofolate dehydrogenase/cyclohydrolase family. In terms of assembly, homodimer.

The enzyme catalyses (6R)-5,10-methylene-5,6,7,8-tetrahydrofolate + NADP(+) = (6R)-5,10-methenyltetrahydrofolate + NADPH. It catalyses the reaction (6R)-5,10-methenyltetrahydrofolate + H2O = (6R)-10-formyltetrahydrofolate + H(+). The protein operates within one-carbon metabolism; tetrahydrofolate interconversion. Catalyzes the oxidation of 5,10-methylenetetrahydrofolate to 5,10-methenyltetrahydrofolate and then the hydrolysis of 5,10-methenyltetrahydrofolate to 10-formyltetrahydrofolate. This chain is Bifunctional protein FolD, found in Mycoplasma genitalium (strain ATCC 33530 / DSM 19775 / NCTC 10195 / G37) (Mycoplasmoides genitalium).